A 370-amino-acid chain; its full sequence is Ubiquitin carboxyl-terminal hydrolase 12-B (370 aa).

The USP domain occupies 39-369 (FGLVNFGNTC…SGYILFYQSR (331 aa)). Cys48 acts as the Nucleophile in catalysis. The tract at residues 145 to 168 (KQEKQNGRIPNGNIDNENNNNTPD) is disordered. The segment covering 155–165 (NGNIDNENNNN) has biased composition (low complexity). 4 residues coordinate Zn(2+): Cys186, Cys189, Cys233, and Cys236. The Proton acceptor role is filled by His317.

Belongs to the peptidase C19 family. USP12/USP46 subfamily. Interacts with WDR48.

It catalyses the reaction Thiol-dependent hydrolysis of ester, thioester, amide, peptide and isopeptide bonds formed by the C-terminal Gly of ubiquitin (a 76-residue protein attached to proteins as an intracellular targeting signal).. In terms of biological role, deubiquitinating enzyme. Has almost no deubiquitinating activity by itself and requires the interaction with wdr48 to have a high activity. This is Ubiquitin carboxyl-terminal hydrolase 12-B (usp12-b) from Xenopus laevis (African clawed frog).